Consider the following 806-residue polypeptide: Leucine--tRNA ligase (806 aa).

A 'HIGH' region motif is present at residues 38–48 (PYPSGEIHMGH). The short motif at 572 to 576 (KMSKS) is the 'KMSKS' region element. An ATP-binding site is contributed by Lys575.

It belongs to the class-I aminoacyl-tRNA synthetase family.

The protein resides in the cytoplasm. The catalysed reaction is tRNA(Leu) + L-leucine + ATP = L-leucyl-tRNA(Leu) + AMP + diphosphate. The polypeptide is Leucine--tRNA ligase (Helicobacter pylori (strain J99 / ATCC 700824) (Campylobacter pylori J99)).